The chain runs to 517 residues: DNA primase DnaG (517 aa).

The Toprim domain maps to 171-257; that stretch reads DAIIILEGRA…CVEDLVQKEV (87 aa). Positions 177, 219, and 221 each coordinate Mg(2+).

This sequence belongs to the archaeal DnaG primase family. Forms a ternary complex with MCM helicase and DNA. Component of the archaeal exosome complex. The cofactor is Mg(2+).

It catalyses the reaction ssDNA + n NTP = ssDNA/pppN(pN)n-1 hybrid + (n-1) diphosphate.. RNA polymerase that catalyzes the synthesis of short RNA molecules used as primers for DNA polymerase during DNA replication. Also part of the exosome, which is a complex involved in RNA degradation. Acts as a poly(A)-binding protein that enhances the interaction between heteromeric, adenine-rich transcripts and the exosome. This is DNA primase DnaG from Methanosarcina barkeri (strain Fusaro / DSM 804).